A 215-amino-acid polypeptide reads, in one-letter code: Cytochrome b6 (215 aa).

Residues 32 to 52 (LFYCLGGITLTCFLIQVATGF) traverse the membrane as a helical segment. Cysteine 35 is a binding site for heme c. Residues histidine 86 and histidine 100 each contribute to the heme b site. 3 helical membrane-spanning segments follow: residues 90 to 110 (ASMM…TGGF), 116 to 136 (STWV…VTGY), and 186 to 206 (LHTF…FLMI). Heme b is bound by residues histidine 187 and histidine 202.

Belongs to the cytochrome b family. PetB subfamily. The 4 large subunits of the cytochrome b6-f complex are cytochrome b6, subunit IV (17 kDa polypeptide, PetD), cytochrome f and the Rieske protein, while the 4 small subunits are PetG, PetL, PetM and PetN. The complex functions as a dimer. Heme b serves as cofactor. Requires heme c as cofactor.

It is found in the plastid. The protein resides in the chloroplast thylakoid membrane. Component of the cytochrome b6-f complex, which mediates electron transfer between photosystem II (PSII) and photosystem I (PSI), cyclic electron flow around PSI, and state transitions. This is Cytochrome b6 from Bigelowiella natans (Pedinomonas minutissima).